A 199-amino-acid polypeptide reads, in one-letter code: Type-4 uracil-DNA glycosylase (199 aa).

Positions 14 and 17 each coordinate [4Fe-4S] cluster. Uracil is bound by residues 41–43 (GEA), F55, and N81. The pseudo-FCL stretch occupies residues 77–114 (VYITNVLKCRPPNNRDPTPEEVEKCGDYLVRQLEAIRP). [4Fe-4S] cluster contacts are provided by C85 and C101. H163 provides a ligand contact to uracil.

It belongs to the uracil-DNA glycosylase (UDG) superfamily. Type 4 (UDGa) family.

It carries out the reaction Hydrolyzes single-stranded DNA or mismatched double-stranded DNA and polynucleotides, releasing free uracil.. Its activity is regulated as follows. Product-inhibited by both uracil and apurinic/apyrimidinic sites. Removes uracil bases that are present in DNA as a result of either deamination of cytosine or misincorporation of dUMP instead of dTMP. Can remove uracil from double-stranded DNA containing either a U/G or U/A base pair as well as from single-stranded DNA. The chain is Type-4 uracil-DNA glycosylase from Archaeoglobus fulgidus (strain ATCC 49558 / DSM 4304 / JCM 9628 / NBRC 100126 / VC-16).